The following is a 481-amino-acid chain: MSAAEGPLVVGVDTSTQSTKALVVDAATGRVVASGQAPHTVSSGTGRESDPRQWWDALGEALSQCGEAAREAAAVSVGGQQHGLVTLDARGEPVRPALLWNDVRSAPQARRLIDELGGAKAWAERTGSVPSASFTVTKWAWLTEHEPEAARAVKAVRLPHDYLTERLTGEGTTDRGDVSGTGWWASGTEAYDEEILARVALDPALLPRVVRPGEVAGTVRDGHGLPFSKGTLVAAGTGDNAAAALGLGLRPGVPVMSLGTSGTAYAVSQRRPADPTGTVAGFADARGDWLPLACTLNCTLAVDRVASLLGLDREAVEPGTDVTLLPFLDGERTPNLPHSSGLLHGLRHDTTAGQLLQAAYDGAVHSLLGALDLVLDADADPSAPLLLIGGGARGTAWQQTVRRLSGRPVQIPEARELVALGAAAQAAGLLTGEDAAAVARRWNTAAGPVLDAVERDEATLNRITGVLSDAAPLLERDAASR.

Substrate is bound at residue 81 to 82; it reads QH. Asp-239 acts as the Proton acceptor in catalysis.

It belongs to the FGGY kinase family.

The enzyme catalyses D-xylulose + ATP = D-xylulose 5-phosphate + ADP + H(+). Its function is as follows. Catalyzes the phosphorylation of D-xylulose to D-xylulose 5-phosphate. The protein is Xylulose kinase of Streptomyces coelicolor (strain ATCC BAA-471 / A3(2) / M145).